A 607-amino-acid chain; its full sequence is Elongation factor 4 (607 aa).

The tr-type G domain maps to Lys-11–Glu-193. GTP contacts are provided by residues Asp-23–Thr-28 and Asn-140–Asp-143.

The protein belongs to the TRAFAC class translation factor GTPase superfamily. Classic translation factor GTPase family. LepA subfamily.

It localises to the cell membrane. The enzyme catalyses GTP + H2O = GDP + phosphate + H(+). Required for accurate and efficient protein synthesis under certain stress conditions. May act as a fidelity factor of the translation reaction, by catalyzing a one-codon backward translocation of tRNAs on improperly translocated ribosomes. Back-translocation proceeds from a post-translocation (POST) complex to a pre-translocation (PRE) complex, thus giving elongation factor G a second chance to translocate the tRNAs correctly. Binds to ribosomes in a GTP-dependent manner. This is Elongation factor 4 from Staphylococcus saprophyticus subsp. saprophyticus (strain ATCC 15305 / DSM 20229 / NCIMB 8711 / NCTC 7292 / S-41).